The sequence spans 410 residues: LL-diaminopimelate aminotransferase (410 aa).

Substrate-binding residues include Tyr15 and Gly42. Pyridoxal 5'-phosphate-binding positions include Tyr72, 108 to 109, Tyr132, Asn187, Tyr218, and 246 to 248; these read SK and SFS. Substrate contacts are provided by Lys109, Tyr132, and Asn187. Position 249 is an N6-(pyridoxal phosphate)lysine (Lys249). Arg257 and Asn292 together coordinate pyridoxal 5'-phosphate. Substrate-binding residues include Asn292 and Arg388.

Belongs to the class-I pyridoxal-phosphate-dependent aminotransferase family. LL-diaminopimelate aminotransferase subfamily. In terms of assembly, homodimer. The cofactor is pyridoxal 5'-phosphate.

The catalysed reaction is (2S,6S)-2,6-diaminopimelate + 2-oxoglutarate = (S)-2,3,4,5-tetrahydrodipicolinate + L-glutamate + H2O + H(+). It functions in the pathway amino-acid biosynthesis; L-lysine biosynthesis via DAP pathway; LL-2,6-diaminopimelate from (S)-tetrahydrodipicolinate (aminotransferase route): step 1/1. Functionally, involved in the synthesis of meso-diaminopimelate (m-DAP or DL-DAP), required for both lysine and peptidoglycan biosynthesis. Catalyzes the direct conversion of tetrahydrodipicolinate to LL-diaminopimelate. This is LL-diaminopimelate aminotransferase from Geobacter metallireducens (strain ATCC 53774 / DSM 7210 / GS-15).